Here is a 97-residue protein sequence, read N- to C-terminus: Large ribosomal subunit protein bL27 (97 aa).

Positions 1-12 (MLKMNLANLQLF) are excised as a propeptide. The interval 14–37 (HKKGGGSTSNGRDSQAKRLGAKAA) is disordered.

Belongs to the bacterial ribosomal protein bL27 family. Post-translationally, the N-terminus is cleaved by ribosomal processing cysteine protease Prp.

This Streptococcus uberis (strain ATCC BAA-854 / 0140J) protein is Large ribosomal subunit protein bL27.